A 198-amino-acid chain; its full sequence is NAD(P)H dehydrogenase (quinone) (198 aa).

Residues 4–189 form the Flavodoxin-like domain; that stretch reads ILVLYYSMYG…SIARYQGEYV (186 aa). FMN-binding positions include 10–15 and 78–80; these read SMYGHI and TRF. Y12 provides a ligand contact to NAD(+). W98 provides a ligand contact to substrate. FMN is bound by residues 113–118 and H133; that span reads STGTGG.

This sequence belongs to the WrbA family. Requires FMN as cofactor.

It catalyses the reaction a quinone + NADH + H(+) = a quinol + NAD(+). The catalysed reaction is a quinone + NADPH + H(+) = a quinol + NADP(+). This Salmonella typhi protein is NAD(P)H dehydrogenase (quinone).